We begin with the raw amino-acid sequence, 311 residues long: Phosphoribosylamine--glycine ligase (311 aa).

Residues 1–191 (DPRVRKQYIQ…LVQVLLAACR (191 aa)) enclose the ATP-grasp domain.

Belongs to the GARS family.

Its subcellular location is the plastid. The protein localises to the chloroplast. The catalysed reaction is 5-phospho-beta-D-ribosylamine + glycine + ATP = N(1)-(5-phospho-beta-D-ribosyl)glycinamide + ADP + phosphate + H(+). Its pathway is purine metabolism; IMP biosynthesis via de novo pathway; N(1)-(5-phospho-D-ribosyl)glycinamide from 5-phospho-alpha-D-ribose 1-diphosphate: step 2/2. This chain is Phosphoribosylamine--glycine ligase (PUR2), found in Vigna unguiculata (Cowpea).